The following is a 395-amino-acid chain: Argininosuccinate synthase (395 aa).

ATP-binding positions include 9–17 and A37; that span reads AYSGGLDTS. L-citrulline is bound by residues Y87 and S92. G117 provides a ligand contact to ATP. 3 residues coordinate L-aspartate: T119, N123, and D124. N123 serves as a coordination point for L-citrulline. The L-citrulline site is built by R127, S173, S182, E258, and Y270.

This sequence belongs to the argininosuccinate synthase family. Type 1 subfamily. In terms of assembly, homotetramer.

It is found in the cytoplasm. The catalysed reaction is L-citrulline + L-aspartate + ATP = 2-(N(omega)-L-arginino)succinate + AMP + diphosphate + H(+). It functions in the pathway amino-acid biosynthesis; L-arginine biosynthesis; L-arginine from L-ornithine and carbamoyl phosphate: step 2/3. The polypeptide is Argininosuccinate synthase (Methanospirillum hungatei JF-1 (strain ATCC 27890 / DSM 864 / NBRC 100397 / JF-1)).